The sequence spans 579 residues: Isocitrate dehydrogenase kinase/phosphatase (579 aa).

ATP is bound by residues 324-330 (ADGTPGM) and Lys-345. The active site involves Asp-380.

The protein belongs to the AceK family.

Its subcellular location is the cytoplasm. The enzyme catalyses L-seryl-[isocitrate dehydrogenase] + ATP = O-phospho-L-seryl-[isocitrate dehydrogenase] + ADP + H(+). In terms of biological role, bifunctional enzyme which can phosphorylate or dephosphorylate isocitrate dehydrogenase (IDH) on a specific serine residue. This is a regulatory mechanism which enables bacteria to bypass the Krebs cycle via the glyoxylate shunt in response to the source of carbon. When bacteria are grown on glucose, IDH is fully active and unphosphorylated, but when grown on acetate or ethanol, the activity of IDH declines drastically concomitant with its phosphorylation. This chain is Isocitrate dehydrogenase kinase/phosphatase, found in Xanthomonas campestris pv. campestris (strain 8004).